The sequence spans 380 residues: Cytochrome b (380 aa).

4 helical membrane-spanning segments follow: residues 33–53 (FGSL…FLAM), 77–98 (WLIR…YMHI), 113–133 (WNIG…GYVL), and 178–198 (FFAF…IHLL). Heme b contacts are provided by His-83 and His-97. Residues His-182 and His-196 each coordinate heme b. His-201 is a binding site for a ubiquinone. Helical transmembrane passes span 226 to 246 (YKDL…ALFS), 288 to 308 (LGGV…PLLH), 320 to 340 (ITQF…WIGG), and 347 to 367 (FIII…VLFP).

The protein belongs to the cytochrome b family. The cytochrome bc1 complex contains 3 respiratory subunits (MT-CYB, CYC1 and UQCRFS1), 2 core proteins (UQCRC1 and UQCRC2) and probably 6 low-molecular weight proteins. It depends on heme b as a cofactor.

The protein resides in the mitochondrion inner membrane. Its function is as follows. Component of the ubiquinol-cytochrome c reductase complex (complex III or cytochrome b-c1 complex) that is part of the mitochondrial respiratory chain. The b-c1 complex mediates electron transfer from ubiquinol to cytochrome c. Contributes to the generation of a proton gradient across the mitochondrial membrane that is then used for ATP synthesis. The polypeptide is Cytochrome b (mt-cyb) (Carassius auratus (Goldfish)).